Here is a 237-residue protein sequence, read N- to C-terminus: Large ribosomal subunit protein uL1 (237 aa).

The protein belongs to the universal ribosomal protein uL1 family. As to quaternary structure, part of the 50S ribosomal subunit.

In terms of biological role, binds directly to 23S rRNA. The L1 stalk is quite mobile in the ribosome, and is involved in E site tRNA release. Protein L1 is also a translational repressor protein, it controls the translation of the L11 operon by binding to its mRNA. In Myxococcus xanthus (strain DK1622), this protein is Large ribosomal subunit protein uL1.